Here is a 93-residue protein sequence, read N- to C-terminus: Small ribosomal subunit protein bS16 (93 aa).

Belongs to the bacterial ribosomal protein bS16 family.

The polypeptide is Small ribosomal subunit protein bS16 (Dictyoglomus turgidum (strain DSM 6724 / Z-1310)).